The following is a 188-amino-acid chain: RWD domain-containing protein 4 (188 aa).

Positions 9-111 (MELEALRSIY…EYAKDNKEQF (103 aa)) constitute an RWD domain. Residues 132–167 (TPSAAPSSKKKDKKEQLSKAQKRKLADKTDHKGELP) are disordered. Over residues 155–166 (KLADKTDHKGEL) the composition is skewed to basic and acidic residues.

This is RWD domain-containing protein 4 (Rwdd4) from Rattus norvegicus (Rat).